A 206-amino-acid chain; its full sequence is RNA pyrophosphohydrolase (206 aa).

The Nudix hydrolase domain occupies 6-149; it reads GYRPNVGIVL…KRGVYARALR (144 aa). The Nudix box signature appears at 38–59; that stretch reads GGMNTDETPVEAMYRELQEETG. Residues 175–206 are disordered; sequence MPGHTAGHDRPRKRPRTRGYWPKKATGDGPAS.

It belongs to the Nudix hydrolase family. RppH subfamily. The cofactor is a divalent metal cation.

Functionally, accelerates the degradation of transcripts by removing pyrophosphate from the 5'-end of triphosphorylated RNA, leading to a more labile monophosphorylated state that can stimulate subsequent ribonuclease cleavage. The chain is RNA pyrophosphohydrolase from Stenotrophomonas maltophilia (strain K279a).